An 86-amino-acid polypeptide reads, in one-letter code: Large ribosomal subunit protein uL24c (86 aa).

This sequence belongs to the universal ribosomal protein uL24 family. In terms of assembly, part of the 50S ribosomal subunit.

It localises to the plastid. It is found in the chloroplast. Its function is as follows. One of two assembly initiator proteins, it binds directly to the 5'-end of the 23S rRNA, where it nucleates assembly of the 50S subunit. This chain is Large ribosomal subunit protein uL24c (rpl24), found in Heterosigma akashiwo (strain NIES-293 / 8280G21-1).